The sequence spans 528 residues: Glucose transporter 1E (528 aa).

Positions 1–22 (MTERRDNVSHAPDAIEGPNDGA) are disordered. Over 1–43 (MTERRDNVSHAPDAIEGPNDGAHAEETSPGFFSFENLGVAQVQ) the chain is Cytoplasmic. The chain crosses the membrane as a helical span at residues 44–64 (VVGGTLNGYVIGYVAVYLLLY). Residues 65 to 118 (LTATECKFTTEGACGGRKIYGCKWSGTTCKFENPKCSEGSDPSDSCKNEVAYTS) are Extracellular-facing. A helical membrane pass occupies residues 119–139 (VYSGIFACAMIVGSMVGSIIA). Residues 140 to 151 (GKCITTFGLKKS) are Cytoplasmic-facing. Residues 152 to 172 (FIIVSITCTIACVVVQVAIEY) form a helical membrane-spanning segment. The Extracellular portion of the chain corresponds to 173–175 (NNY). Residues 176–196 (YALCTGRVLIGLGVGILCSVF) traverse the membrane as a helical segment. The Cytoplasmic portion of the chain corresponds to 197–213 (PMYVNENAHPKLCKMDG). A helical membrane pass occupies residues 214 to 234 (VLFQVFTTLGIMLAAMLGLIL). The Extracellular segment spans residues 235–250 (DKTGASKEEANMAGRL). Residues 251 to 271 (HVFSAVPLGLSVAMFLVGMFL) traverse the membrane as a helical segment. Residues 272-301 (RESTATFAQDDDGKADGGMDPNEYGWGQML) lie on the Cytoplasmic side of the membrane. A helical membrane pass occupies residues 302–322 (WPLFMGAVTAGTLQLTGINAV). The Extracellular segment spans residues 323 to 338 (MNYAPKITENLGMDPS). A helical membrane pass occupies residues 339 to 359 (LGNFLVMAWNFVTSLVAIPLA). At 360–367 (SRFTMRQM) the chain is on the cytoplasmic side. A helical membrane pass occupies residues 368–388 (FITCSFVASCMCLFLCGIPVF). At 389-403 (PGVAEEKVKNGVATT) the chain is on the extracellular side. A helical transmembrane segment spans residues 404 to 424 (GIALFIAAFEFGVGSCFFVLA). The Cytoplasmic segment spans residues 425–438 (QDLFPPSFRPKGSS). Residues 439-459 (FVVMMQFIFNILINLLYPITT) form a helical membrane-spanning segment. Residues 460 to 475 (EAISGGATGDQDKGQA) are Extracellular-facing. Residues 476-496 (VVFILFGLIGLICFVLQFFYL) traverse the membrane as a helical segment. Residues 497 to 528 (YPYDANQDHENDHGTEPVERILSPVDVPTPRN) lie on the Cytoplasmic side of the membrane. Residues 507-528 (NDHGTEPVERILSPVDVPTPRN) are disordered.

This sequence belongs to the major facilitator superfamily. Sugar transporter (TC 2.A.1.1) family.

The protein resides in the membrane. Facilitative glucose transporter. The chain is Glucose transporter 1E (THT1E) from Trypanosoma brucei brucei.